A 99-amino-acid chain; its full sequence is DNA-binding protein Fis (99 aa).

The tract at residues 1 to 25 (MFEQKISSEALTTTTSIPATGQITQ) is disordered. A DNA-binding region (H-T-H motif) is located at residues 75-94 (QTRAATMLGINRGTLRKKLK).

It belongs to the transcriptional regulatory Fis family. In terms of assembly, homodimer.

Functionally, activates ribosomal RNA transcription. Plays a direct role in upstream activation of rRNA promoters. This is DNA-binding protein Fis from Psychromonas ingrahamii (strain DSM 17664 / CCUG 51855 / 37).